Reading from the N-terminus, the 71-residue chain is UPF0437 protein asl1434 (71 aa).

The protein belongs to the UPF0437 family.

In Nostoc sp. (strain PCC 7120 / SAG 25.82 / UTEX 2576), this protein is UPF0437 protein asl1434.